Consider the following 171-residue polypeptide: Large ribosomal subunit protein bL9 (171 aa).

The protein belongs to the bacterial ribosomal protein bL9 family.

Binds to the 23S rRNA. In Rickettsia peacockii (strain Rustic), this protein is Large ribosomal subunit protein bL9.